The chain runs to 156 residues: Small ribosomal subunit protein uS7 (156 aa).

It belongs to the universal ribosomal protein uS7 family. In terms of assembly, part of the 30S ribosomal subunit. Contacts proteins S9 and S11.

Its function is as follows. One of the primary rRNA binding proteins, it binds directly to 16S rRNA where it nucleates assembly of the head domain of the 30S subunit. Is located at the subunit interface close to the decoding center, probably blocks exit of the E-site tRNA. This is Small ribosomal subunit protein uS7 from Brucella anthropi (strain ATCC 49188 / DSM 6882 / CCUG 24695 / JCM 21032 / LMG 3331 / NBRC 15819 / NCTC 12168 / Alc 37) (Ochrobactrum anthropi).